Consider the following 244-residue polypeptide: uncharacterized protein (244 aa).

Helical transmembrane passes span 21–41 (FPYS…YGIY), 44–64 (ALGF…AGSV), 66–86 (FIAA…LITL), 139–159 (WYMF…AAMG), 165–185 (VLPF…LVIF), and 199–219 (LLGL…YFLI).

Belongs to the AzlC family.

The protein localises to the cell membrane. This is an uncharacterized protein from Haemophilus influenzae (strain ATCC 51907 / DSM 11121 / KW20 / Rd).